Here is a 704-residue protein sequence, read N- to C-terminus: RCC1 domain-containing protein DDB_G0295713 (704 aa).

RCC1 repeat units follow at residues 1 to 48 (MYCW…VKGE) and 69 to 120 (KNRC…ITDQ). Residues 221 to 246 (YNNNNNNNNNNNNNNNNNNNNNNNNN) are disordered. A compositionally biased stretch (low complexity) spans 222–246 (NNNNNNNNNNNNNNNNNNNNNNNNN). The stretch at 298–348 (QNQVYGWGENLNGQLGIEGIDYSTEPILIELPLVEIKHISSGAYHSAFVTN) is one RCC1 3 repeat. The segment covering 412–431 (IKDKNENNETKHTNKNKDNH) has biased composition (basic and acidic residues). The segment at 412-458 (IKDKNENNETKHTNKNKDNHDDDDESDHSDDDHHDDDDNDKDSQGIN) is disordered. Over residues 432-451 (DDDDESDHSDDDHHDDDDND) the composition is skewed to acidic residues. The stretch at 668-698 (IEQTSTQVANSENENENEIEMKMKMKKNEMK) forms a coiled coil.

The chain is RCC1 domain-containing protein DDB_G0295713 from Dictyostelium discoideum (Social amoeba).